We begin with the raw amino-acid sequence, 292 residues long: MAKIYSPSFPGTLCLCIFTLLTLMFIRVSARPATFVEDFKAAWSESHIRQMEDGKAIQLVLDQSTGCGFASKRKYLFGRVSMKIKLIPGDSAGTVTAFYMNSDTATVRDELDFEFLGNRSGQPYSVQTNIFAHGKGDREQRVNLWFDPSMDYHTYTILWSHKHIVFYVDDVPIREYKNNEAKNIAYPTSQPMGVYSTLWEADDWATRGGLEKIDWSKAPFYAYYKDFDIEGCPVPGPTFCPSNPHNWWEGYAYQSLNAVEARRYRWVRVNHMVYDYCTDRSRFPVPPPECRA.

A signal peptide spans 1–30 (MAKIYSPSFPGTLCLCIFTLLTLMFIRVSA). Residues 31–224 (RPATFVEDFK…WSKAPFYAYY (194 aa)) form the GH16 domain. The Nucleophile role is filled by E110. The active-site Proton donor is E114. E114 contributes to the xyloglucan binding site. N118 carries N-linked (GlcNAc...) asparagine glycosylation. Residues 127-129 (QTN), 137-139 (DRE), 203-204 (DW), and G208 contribute to the xyloglucan site. 2 disulfides stabilise this stretch: C232-C240 and C277-C290. A xyloglucan-binding site is contributed by R282.

It belongs to the glycosyl hydrolase 16 family. XTH group 1 subfamily. Post-translationally, contains at least one intrachain disulfide bond essential for its enzymatic activity.

It localises to the secreted. Its subcellular location is the cell wall. The protein localises to the extracellular space. The protein resides in the apoplast. It carries out the reaction breaks a beta-(1-&gt;4) bond in the backbone of a xyloglucan and transfers the xyloglucanyl segment on to O-4 of the non-reducing terminal glucose residue of an acceptor, which can be a xyloglucan or an oligosaccharide of xyloglucan.. Catalyzes xyloglucan endohydrolysis (XEH) and/or endotransglycosylation (XET). Cleaves and religates xyloglucan polymers, an essential constituent of the primary cell wall, and thereby participates in cell wall construction of growing tissues. The chain is Probable xyloglucan endotransglucosylase/hydrolase protein 6 (XTH6) from Arabidopsis thaliana (Mouse-ear cress).